A 208-amino-acid chain; its full sequence is Methionine-R-sulfoxide reductase B1 (208 aa).

Residues 27-36 show a composition bias toward basic and acidic residues; the sequence is QDSDNPDKRY. The segment at 27–48 is disordered; the sequence is QDSDNPDKRYSGPAATMDNKSE. A MsrB domain is found at 54–188; sequence KEELRKRLTP…NSASIEFVNA (135 aa). 4 residues coordinate Zn(2+): Cys-93, Cys-96, Cys-154, and Cys-157. An intrachain disulfide couples Cys-111 to Cys-177. Cys-177 (nucleophile) is an active-site residue. Residues 189–208 are disordered; it reads DPATSSPPVATPTAAPIAQQ.

It belongs to the MsrB Met sulfoxide reductase family. The cofactor is Zn(2+). In terms of tissue distribution, present in the embryonic nervous system (brain and cord) in neuronal cell bodies, along axons. Also present in embryonic muscles in motor axons. Localizes to growing bristle tips where it is distributed in small puntae. Present at and at sites of actin localization.

It localises to the cytoplasm. Its subcellular location is the nucleus. The protein resides in the cytoskeleton. It catalyses the reaction L-methionyl-[protein] + [thioredoxin]-disulfide + H2O = L-methionyl-(R)-S-oxide-[protein] + [thioredoxin]-dithiol. Methionine-sulfoxide reductase that specifically reduces methionine (R)-sulfoxide back to methionine. While in many cases methionine oxidation is the result of random oxidation following oxidative stress, methionine oxidation is also a post-translational modification that takes place on specific residues. Acts as a regulator of actin assembly by reducing methionine (R)-sulfoxide mediated by Mical on actin thereby promoting filament repolymerization. This is Methionine-R-sulfoxide reductase B1 (SelR) from Drosophila melanogaster (Fruit fly).